We begin with the raw amino-acid sequence, 248 residues long: Sperm-specific protein Don juan (248 aa).

Positions 82-147 (KEGNQDELEN…EKKTKCAKKD (66 aa)) form a coiled coil. The interval 146–200 (KDPCKKKDPCKKKDPCKKKDPCKKKDPCKKKDPCKKKDPCKKKDPCKKKGGDLKK) is disordered. Tandem repeats lie at residues 147-152 (DPCKKK), 153-158 (DPCKKK), 159-164 (DPCKKK), 165-170 (DPCKKK), 171-176 (DPCKKK), 177-182 (DPCKKK), 183-188 (DPCKKK), and 189-194 (DPCKKK). Residues 147-194 (DPCKKKDPCKKKDPCKKKDPCKKKDPCKKKDPCKKKDPCKKKDPCKKK) are 8 X 6 AA tandem repeat of D-P-C-K-K-K. A coiled-coil region spans residues 197 to 244 (DLKKKCKKLAEKEKCKKLAKKEKMKKLQKKCKKMAQKEKCKKMAKKDK).

As to expression, expression limited to post-meiotic male germ cells. Expressed in elongated spermatids during individualization and in finally elongated nuclei of spermatids. After completion of nuclear shaping it is no longer expressed in the sperm heads with the onset of individualization.

The protein localises to the nucleus. The protein resides in the mitochondrion. In terms of biological role, may be involved in the final steps of mitochondrial differentiation within the flagellum. This chain is Sperm-specific protein Don juan (dj), found in Drosophila melanogaster (Fruit fly).